We begin with the raw amino-acid sequence, 212 residues long: Adenylate kinase (212 aa).

10 to 15 (GAGKGT) provides a ligand contact to ATP. The segment at 30–59 (AIGDIFRTIIKTSTSEAELINNYVKQGELI) is NMP. Residues Arg-36, 57-59 (ELI), 85-88 (GYPR), and Gln-92 each bind AMP. The interval 122-160 (GRYSCKNCGKIYNRYFLQPKTDNVCDVCGSSTFDYRKDD) is LID. An ATP-binding site is contributed by Arg-123. Residues Cys-126 and Cys-129 each coordinate Zn(2+). Position 132 to 133 (132 to 133 (IY)) interacts with ATP. Zn(2+)-binding residues include Cys-146 and Cys-149. Residues Arg-157 and Arg-168 each contribute to the AMP site. An ATP-binding site is contributed by Lys-196.

It belongs to the adenylate kinase family. As to quaternary structure, monomer.

The protein resides in the cytoplasm. The catalysed reaction is AMP + ATP = 2 ADP. Its pathway is purine metabolism; AMP biosynthesis via salvage pathway; AMP from ADP: step 1/1. Its function is as follows. Catalyzes the reversible transfer of the terminal phosphate group between ATP and AMP. Plays an important role in cellular energy homeostasis and in adenine nucleotide metabolism. The sequence is that of Adenylate kinase from Rickettsia africae (strain ESF-5).